The primary structure comprises 430 residues: Adenylosuccinate synthetase (430 aa).

GTP is bound by residues 12-18 (GDEGKGK) and 40-42 (GHT). The active-site Proton acceptor is aspartate 13. The Mg(2+) site is built by aspartate 13 and glycine 40. IMP contacts are provided by residues 13–16 (DEGK), 38–41 (NAGH), threonine 130, arginine 144, glutamine 224, threonine 239, and arginine 303. Histidine 41 (proton donor) is an active-site residue. Position 299 to 305 (299 to 305 (TVTGRKR)) interacts with substrate. GTP-binding positions include arginine 305, 331–333 (KLD), and 413–415 (STS).

Belongs to the adenylosuccinate synthetase family. As to quaternary structure, homodimer. Requires Mg(2+) as cofactor.

Its subcellular location is the cytoplasm. The catalysed reaction is IMP + L-aspartate + GTP = N(6)-(1,2-dicarboxyethyl)-AMP + GDP + phosphate + 2 H(+). It functions in the pathway purine metabolism; AMP biosynthesis via de novo pathway; AMP from IMP: step 1/2. Functionally, plays an important role in the de novo pathway of purine nucleotide biosynthesis. Catalyzes the first committed step in the biosynthesis of AMP from IMP. The chain is Adenylosuccinate synthetase from Parvibaculum lavamentivorans (strain DS-1 / DSM 13023 / NCIMB 13966).